The chain runs to 510 residues: Ectonucleoside triphosphate diphosphohydrolase 1 (510 aa).

The Cytoplasmic portion of the chain corresponds to 1–16; it reads MEDRRESELKTFCSKN. The chain crosses the membrane as a helical span at residues 17–37; that stretch reads ILVILGFSSIIAVIALLALGL. At 38–477 the chain is on the extracellular side; the sequence is TQNKPLPENV…SSTRLSHSTY (440 aa). An N-linked (GlcNAc...) asparagine glycan is attached at asparagine 73. An intrachain disulfide couples cysteine 84 to cysteine 108. Glutamate 174 functions as the Proton acceptor in the catalytic mechanism. 4 N-linked (GlcNAc...) asparagine glycosylation sites follow: asparagine 245, asparagine 274, asparagine 291, and asparagine 333. Disulfide bonds link cysteine 255–cysteine 300 and cysteine 281–cysteine 324. Cysteine 337 and cysteine 342 are joined by a disulfide. The N-linked (GlcNAc...) asparagine glycan is linked to asparagine 370. Residues cysteine 390 and cysteine 413 are joined by a disulfide bond. Asparagine 457 is a glycosylation site (N-linked (GlcNAc...) asparagine). Residues 478–498 traverse the membrane as a helical segment; the sequence is VFLMVLFSLILVIVVIIGLFV. Residues 499–510 lie on the Cytoplasmic side of the membrane; that stretch reads CHRPSYFWKDMV.

The protein belongs to the GDA1/CD39 NTPase family. As to quaternary structure, homodimer; disulfide-linked. Ca(2+) is required as a cofactor. It depends on Mg(2+) as a cofactor. In terms of processing, N-glycosylated. Post-translationally, cleaved into two polypeptides that seem to stay together by non-covalent interactions. The N-terminus is blocked. In terms of processing, palmitoylated on Cys-13; which is required for caveola targeting. In terms of tissue distribution, highest expression found in vascular endothelium, smooth muscle, spleen and lung (at protein level). High expression also found in stomach, duodenum, kidney, lymph node and aorta (at protein level).

Its subcellular location is the membrane. It is found in the caveola. It catalyses the reaction a ribonucleoside 5'-triphosphate + 2 H2O = a ribonucleoside 5'-phosphate + 2 phosphate + 2 H(+). The enzyme catalyses a ribonucleoside 5'-triphosphate + H2O = a ribonucleoside 5'-diphosphate + phosphate + H(+). It carries out the reaction a ribonucleoside 5'-diphosphate + H2O = a ribonucleoside 5'-phosphate + phosphate + H(+). The catalysed reaction is ATP + 2 H2O = AMP + 2 phosphate + 2 H(+). It catalyses the reaction ATP + H2O = ADP + phosphate + H(+). The enzyme catalyses ADP + H2O = AMP + phosphate + H(+). It carries out the reaction CTP + 2 H2O = CMP + 2 phosphate + 2 H(+). The catalysed reaction is CTP + H2O = CDP + phosphate + H(+). It catalyses the reaction CDP + H2O = CMP + phosphate + H(+). The enzyme catalyses GTP + 2 H2O = GMP + 2 phosphate + 2 H(+). It carries out the reaction GTP + H2O = GDP + phosphate + H(+). The catalysed reaction is GDP + H2O = GMP + phosphate + H(+). It catalyses the reaction ITP + 2 H2O = IMP + 2 phosphate + 2 H(+). The enzyme catalyses ITP + H2O = IDP + phosphate + H(+). It carries out the reaction IDP + H2O = IMP + phosphate + H(+). The catalysed reaction is UTP + 2 H2O = UMP + 2 phosphate + 2 H(+). It catalyses the reaction UTP + H2O = UDP + phosphate + H(+). The enzyme catalyses UDP + H2O = UMP + phosphate + H(+). The ATP diphosphohydrolase activity is decreased by half by sodium azide. Its function is as follows. Catalyzes the hydrolysis of both di- and triphosphate nucleotides (NDPs and NTPs) and hydrolyze NTPs to nucleotide monophosphates (NMPs) in two distinct successive phosphate-releasing steps, with NDPs as intermediates and participates in the regulation of extracellular levels of nucleotides. By hydrolyzing proinflammatory ATP and platelet-activating ADP to AMP, it blocks platelet aggregation and supports blood flow. The sequence is that of Ectonucleoside triphosphate diphosphohydrolase 1 from Sus scrofa (Pig).